Reading from the N-terminus, the 203-residue chain is Large ribosomal subunit protein uL18 (203 aa).

This sequence belongs to the universal ribosomal protein uL18 family. As to quaternary structure, part of the 50S ribosomal subunit. Contacts the 5S and 23S rRNAs.

Functionally, this is one of the proteins that bind and probably mediate the attachment of the 5S RNA into the large ribosomal subunit, where it forms part of the central protuberance. This chain is Large ribosomal subunit protein uL18, found in Pyrococcus furiosus (strain ATCC 43587 / DSM 3638 / JCM 8422 / Vc1).